The following is a 411-amino-acid chain: uncharacterized protein (411 aa).

The first 21 residues, 1–21 (MHSRILLLLLMFAFNVGLINC), serve as a signal peptide directing secretion. Positions 28 to 67 (PQSNCKIRCENGGMCVFDLERPDFHSCICLLGVYTGDRCQ) constitute an EGF-like domain. 3 cysteine pairs are disulfide-bonded: cysteine 32/cysteine 42, cysteine 36/cysteine 54, and cysteine 56/cysteine 66. Polar residues predominate over residues 78–97 (TATSDETSHPMNIQHQQSQA). Disordered regions lie at residues 78–312 (TATS…EPIR) and 337–375 (HPIEEDEYWDETSKKTDEDSWTAENEGTKKTEEADEYGM). Over residues 100 to 230 (DDARRRDDER…VEKELNDKRT (131 aa)) the composition is skewed to basic and acidic residues. A compositionally biased stretch (acidic residues) spans 237 to 266 (FEYEGGDEEYPQVAEKEDEYDEGYETDNTE). Low complexity predominate over residues 267 to 276 (DVTITTTKTT).

This is an uncharacterized protein from Caenorhabditis elegans.